A 333-amino-acid polypeptide reads, in one-letter code: O-acetyl transferase (333 aa).

This sequence belongs to the acyltransferase 3 family.

It is found in the host cell inner membrane. In terms of biological role, antigenically converts S.flexneri serotype X to 3a, Y to 3b, 1a to 1b and 4a to 4b by O-acetylating the O-antigenic polysaccharide chain. This chain is O-acetyl transferase (OAC), found in Shigella flexneri (Shigella flexneri bacteriophage VI).